The following is a 270-amino-acid chain: SAMP-activating enzyme E1 (270 aa).

Residues G42, D63, 70–74 (SNLQR), and K87 contribute to the ATP site. K113 participates in a covalent cross-link: Glycyl lysine isopeptide (Lys-Gly) (interchain with G-Cter in SAMP2). 131–132 (DN) serves as a coordination point for ATP. C171 and C174 together coordinate Zn(2+). Catalysis depends on C188, which acts as the Glycyl thioester intermediate. Zn(2+) contacts are provided by C245 and C248.

This sequence belongs to the HesA/MoeB/ThiF family. As to quaternary structure, interacts with NcsA. Zn(2+) is required as a cofactor. In terms of processing, sampylated at Lys-113 with the archaeal ubiquitin-like protein SAMP2. Also sampylated with SAMP1.

It catalyses the reaction [small archaeal modifier protein]-C-terminal Gly-Gly + ATP + H(+) = [small archaeal modifier protein]-C-terminal Gly-Gly-AMP + diphosphate. Functionally, likely activates multiple ubiquitin-like SAMPs for protein conjugation as well as for sulfur transfer, via ATP-dependent adenylation at their C-terminus. In fact, it is required for the formation of all three SAMP1-, SAMP2- and SAMP3-protein conjugates, and for molybdenum cofactor (MoCo) biosynthesis and thiolation of tRNAs. The sequence is that of SAMP-activating enzyme E1 (ubaA) from Haloferax volcanii (strain ATCC 29605 / DSM 3757 / JCM 8879 / NBRC 14742 / NCIMB 2012 / VKM B-1768 / DS2) (Halobacterium volcanii).